We begin with the raw amino-acid sequence, 372 residues long: Glutamate 5-kinase (372 aa).

Lys14 contributes to the ATP binding site. Substrate contacts are provided by Ser54, Asp141, and Asn153. 173 to 174 (TD) provides a ligand contact to ATP. Positions 280 to 358 (AGRIVLDQGA…TDILSILGFV (79 aa)) constitute a PUA domain.

This sequence belongs to the glutamate 5-kinase family.

It is found in the cytoplasm. The enzyme catalyses L-glutamate + ATP = L-glutamyl 5-phosphate + ADP. It participates in amino-acid biosynthesis; L-proline biosynthesis; L-glutamate 5-semialdehyde from L-glutamate: step 1/2. Catalyzes the transfer of a phosphate group to glutamate to form L-glutamate 5-phosphate. This chain is Glutamate 5-kinase, found in Herminiimonas arsenicoxydans.